Here is a 248-residue protein sequence, read N- to C-terminus: Putative transposase YncI (248 aa).

It belongs to the transposase 11 family.

This is Putative transposase YncI (yncI) from Escherichia coli (strain K12).